The sequence spans 1730 residues: SH3 and multiple ankyrin repeat domains protein 3 (1730 aa).

An intramolecular interaction with the ANK repeats region spans residues 1–75 (MDGPGASAVV…KFLDEERLLQ (75 aa)). Phosphotyrosine is present on Tyr122. ANK repeat units follow at residues 148-178 (SGEC…HLDF), 182-211 (DGLT…SPDY), 215-245 (RGLT…QLGT), 249-278 (NGWQ…NMGA), 282-311 (SGNT…NKDV), and 315-345 (NSQT…DVVP). The segment at 354-466 (KRRRLAGPSG…PPPRGPKRKL (113 aa)) is disordered. 4 positions are modified to phosphoserine: Ser373, Ser375, Ser387, and Ser394. A compositionally biased stretch (basic and acidic residues) spans 404–415 (LQEEKDRDRDGE). The segment covering 444 to 460 (APGPGPASPAPPAPPPR) has biased composition (pro residues). Residues 470–529 (VPGRKFIAVKAHSPQGEGEIPLHRGEAVKVLSIGEGGFWEGTVKGRTGWFPADCVEEVQM) form the SH3 domain. Residue Ser482 is modified to Phosphoserine. A Phosphotyrosine modification is found at Tyr555. The region spanning 570 to 664 (VAILQKRDHE…RLVMKVVSVT (95 aa)) is the PDZ domain. The disordered stretch occupies residues 664–688 (TRKPEEDGARRRAPPPPKRAPSTTL). Positions 677–684 (PPPPKRAP) are required for interaction with ABI1. Residues Ser694, Ser781, Ser790, and Ser801 each carry the phosphoserine modification. Disordered regions lie at residues 760–1460 (QGLP…AAGP) and 1475–1524 (GDPV…SLLD). Pro residues predominate over residues 812–844 (IPPPPQTAPPPPPAPYYFDSGPPPTFSPPPPPG). Positions 857-869 (GLEARLGAGAAGL) are enriched in low complexity. Residues Ser890 and Ser897 each carry the phosphoserine modification. Thr912 carries the phosphothreonine modification. Tyr930 carries the post-translational modification Phosphotyrosine. Arg965 bears the Asymmetric dimethylarginine mark. Ser995 bears the Phosphoserine mark. A compositionally biased stretch (basic and acidic residues) spans 1016-1026 (VKERRLEERRR). The segment covering 1078 to 1092 (LKPLVGGPSLGPSGS) has biased composition (low complexity). The segment covering 1122–1131 (SQTPSRSPTP) has biased composition (polar residues). Phosphothreonine is present on Thr1130. Phosphoserine occurs at positions 1134, 1159, 1163, and 1166. The span at 1174 to 1194 (ARREAEKPPREERKSPEDKKS) shows a compositional bias: basic and acidic residues. A Phosphothreonine modification is found at Thr1234. A compositionally biased stretch (low complexity) spans 1235–1250 (PELAPAPMQAAAVAEP). 2 stretches are compositionally biased toward pro residues: residues 1251-1261 (MPSPRAQPPGS) and 1321-1333 (TPPP…PTTV). Position 1253 is a phosphoserine (Ser1253). The segment covering 1360 to 1370 (ADTRSSSDPHL) has biased composition (basic and acidic residues). The span at 1371–1392 (ETTSTISTVSSMSTLSSESGEL) shows a compositional bias: low complexity. The short motif at 1410-1416 (PPVPPKP) is the SH3-binding element. A Phosphoserine modification is found at Ser1420. A coiled-coil region spans residues 1494-1514 (ISELSSRLQQLNKDTRSLGEE). Positions 1495–1505 (SELSSRLQQLN) are enriched in polar residues. Phosphoserine occurs at positions 1510, 1521, 1529, and 1539. Disordered stretches follow at residues 1546 to 1584 (ISAQ…PASL) and 1627 to 1663 (VRSV…QQKP). Over residues 1627 to 1637 (VRSVSARSRSP) the composition is skewed to low complexity. Residues Ser1634, Ser1636, and Ser1638 each carry the phosphoserine modification. The segment covering 1638 to 1648 (SPSPLPSPSPG) has biased composition (pro residues). Over residues 1649 to 1658 (SGPSAGPRRP) the composition is skewed to low complexity. Residues 1667-1730 (WSKFDVGDWL…ERALRQLDGS (64 aa)) form the SAM domain.

This sequence belongs to the SHANK family. In terms of assembly, may homomultimerize via its SAM domain. Interacts with BAIAP2, DBNL and SLC17A7/VGLUT1. Interacts with DLGAP1/GKAP, GRM1/MGLUR1, GRM5/MGLUR5 and LZTS3 C-termini via its PDZ domain. Interacts with ABI1, HOMER1, HOMER2, HOMER3 and CTTN/cortactin SH3 domain. Is part of a complex with DLG4/PSD-95 and DLGAP1/GKAP. Interacts (via PDZ domain) with the GRIA1 subunit of the AMPA receptor (via PDZ-binding motif). Interacts with WASF1 and CYFIP2; the interactions mediate the association of SHANK3 with the WAVE1 complex. Interacts with ARPC2; the interaction probably mediates the association of SHANK3 with the Arp2/3 complex. Interacts (via ANK repeats) with SHARPIN and SPTAN1. Interacts (via PDZ domain) with ARHGAP44 (probably via PDZ-binding motif); the interaction takes place in dendritic spines and promotes GRIA1 exocytosis. Interacts with CAMK2A. Interacts with DIP2A. Interacts with ADGRL3. In terms of tissue distribution, in brain, highly expressed in striatum, thalamus, hippocampus and granule cells of the cerebellum.

Its subcellular location is the cytoplasm. It is found in the synapse. The protein localises to the postsynaptic density. The protein resides in the cell projection. It localises to the dendritic spine. In terms of biological role, major scaffold postsynaptic density protein which interacts with multiple proteins and complexes to orchestrate the dendritic spine and synapse formation, maturation and maintenance. Interconnects receptors of the postsynaptic membrane including NMDA-type and metabotropic glutamate receptors via complexes with GKAP/PSD-95 and HOMER, respectively, and the actin-based cytoskeleton. Plays a role in the structural and functional organization of the dendritic spine and synaptic junction through the interaction with Arp2/3 and WAVE1 complex as well as the promotion of the F-actin clusters. By way of this control of actin dynamics, participates in the regulation of developing neurons growth cone motility and the NMDA receptor-signaling. Also modulates GRIA1 exocytosis and GRM5/MGLUR5 expression and signaling to control the AMPA and metabotropic glutamate receptor-mediated synaptic transmission and plasticity. May be required at an early stage of synapse formation and be inhibited by IGF1 to promote synapse maturation. The chain is SH3 and multiple ankyrin repeat domains protein 3 (Shank3) from Mus musculus (Mouse).